The following is a 259-amino-acid chain: Truncated Ankyrin repeat protein OPG003 (259 aa).

The protein belongs to the orthopoxvirus OPG003 family.

The sequence is that of Truncated Ankyrin repeat protein OPG003 (OPG003) from Vaccinia virus (strain Copenhagen) (VACV).